Reading from the N-terminus, the 277-residue chain is Ras suppressor protein 1 (277 aa).

The interval 1–23 (MSKSLKKLVEESREKNQPEVDMS) is disordered. The residue at position 2 (serine 2) is an N-acetylserine. Basic and acidic residues predominate over residues 7–23 (KLVEESREKNQPEVDMS). LRR repeat units lie at residues 41 to 63 (HITQ…AELK), 64 to 85 (NLEV…ISSL), 87 to 108 (KLKH…FGSS), 110 to 133 (LLEV…FFYL), 135 to 156 (TLRA…IGKL), 158 to 179 (KLQI…IGEL), and 181 to 202 (QLKE…LGNL). The interval 250–277 (MQANPEPPKKNNDKSKKISRKPLAAKNK) is disordered. Positions 256–265 (PPKKNNDKSK) are enriched in basic and acidic residues.

In terms of biological role, potentially plays a role in the Ras signal transduction pathway. Capable of suppressing v-Ras transformation in vitro. The chain is Ras suppressor protein 1 (Rsu1) from Mus musculus (Mouse).